The sequence spans 319 residues: tRNA-cytidine(32) 2-sulfurtransferase (319 aa).

The PP-loop motif signature appears at 43–48 (SGGKDS). [4Fe-4S] cluster contacts are provided by cysteine 118, cysteine 121, and cysteine 209. Positions 272-297 (DLAFDSEKMPERFSDGSEEDESEIKI) are disordered. Residues 276–286 (DSEKMPERFSD) are compositionally biased toward basic and acidic residues.

It belongs to the TtcA family. In terms of assembly, homodimer. Requires Mg(2+) as cofactor. It depends on [4Fe-4S] cluster as a cofactor.

Its subcellular location is the cytoplasm. The enzyme catalyses cytidine(32) in tRNA + S-sulfanyl-L-cysteinyl-[cysteine desulfurase] + AH2 + ATP = 2-thiocytidine(32) in tRNA + L-cysteinyl-[cysteine desulfurase] + A + AMP + diphosphate + H(+). The protein operates within tRNA modification. Its function is as follows. Catalyzes the ATP-dependent 2-thiolation of cytidine in position 32 of tRNA, to form 2-thiocytidine (s(2)C32). The sulfur atoms are provided by the cysteine/cysteine desulfurase (IscS) system. The sequence is that of tRNA-cytidine(32) 2-sulfurtransferase from Neisseria gonorrhoeae (strain ATCC 700825 / FA 1090).